A 369-amino-acid chain; its full sequence is Phosphatidylglycerol--prolipoprotein diacylglyceryl transferase (369 aa).

3 helical membrane-spanning segments follow: residues 26 to 46 (YYGILYATGILVAIIAGILTL), 60 to 80 (YVFIGIISIIFGARTWSFIIG), and 97 to 117 (LAIQGGVIFTITTGLIFFFFI). Arginine 167 is a binding site for a 1,2-diacyl-sn-glycero-3-phospho-(1'-sn-glycerol). 2 consecutive transmembrane segments (helical) span residues 216–236 (VPIFLIESFFNVIAFIIIVFL) and 273–293 (FVTSIVTSVLFLLGGSIGFIF).

Belongs to the Lgt family.

It is found in the cell membrane. The catalysed reaction is L-cysteinyl-[prolipoprotein] + a 1,2-diacyl-sn-glycero-3-phospho-(1'-sn-glycerol) = an S-1,2-diacyl-sn-glyceryl-L-cysteinyl-[prolipoprotein] + sn-glycerol 1-phosphate + H(+). Its pathway is protein modification; lipoprotein biosynthesis (diacylglyceryl transfer). Functionally, catalyzes the transfer of the diacylglyceryl group from phosphatidylglycerol to the sulfhydryl group of the N-terminal cysteine of a prolipoprotein, the first step in the formation of mature lipoproteins. This is Phosphatidylglycerol--prolipoprotein diacylglyceryl transferase from Mycoplasmoides gallisepticum (strain R(low / passage 15 / clone 2)) (Mycoplasma gallisepticum).